Here is a 386-residue protein sequence, read N- to C-terminus: Protein phosphatase methylesterase 1 (386 aa).

The segment at 1–38 (MSALEKSMHLGRLPSRPPLPGSGGSQSGAKMRMGPGRK) is disordered. Ser15 carries the phosphoserine modification. The residue at position 16 (Arg16) is an Asymmetric dimethylarginine; alternate. Arg16 is subject to Omega-N-methylarginine; alternate. Ser42 carries the phosphoserine modification. Catalysis depends on residues Ser156 and Asp181. The segment covering 254–265 (IIEEEEEDEEGS) has biased composition (acidic residues). The interval 254 to 280 (IIEEEEEDEEGSESISKRKKEDDMETK) is disordered. Basic and acidic residues predominate over residues 268 to 280 (ISKRKKEDDMETK). His349 is an active-site residue.

Belongs to the AB hydrolase superfamily. Binds PPP2CA and PPP2CB. In terms of processing, phosphorylated by SIK1 following increases in intracellular sodium, leading to dissociation from the protein phosphatase 2A (PP2A) complex and subsequent dephosphorylation of sodium/potassium-transporting ATPase ATP1A1.

It carries out the reaction [phosphatase 2A protein]-C-terminal L-leucine methyl ester + H2O = [phosphatase 2A protein]-C-terminal L-leucine + methanol + H(+). Its function is as follows. Demethylates proteins that have been reversibly carboxymethylated. Demethylates PPP2CB (in vitro) and PPP2CA. Binding to PPP2CA displaces the manganese ion and inactivates the enzyme. This Homo sapiens (Human) protein is Protein phosphatase methylesterase 1 (PPME1).